A 208-amino-acid polypeptide reads, in one-letter code: Uracil phosphoribosyltransferase (208 aa).

Residues Arg-78, Arg-103, and 130–138 (DPMLATGGS) contribute to the 5-phospho-alpha-D-ribose 1-diphosphate site. Residues Ile-193 and 198–200 (GDA) contribute to the uracil site. Asp-199 contributes to the 5-phospho-alpha-D-ribose 1-diphosphate binding site.

Belongs to the UPRTase family. Mg(2+) is required as a cofactor.

The catalysed reaction is UMP + diphosphate = 5-phospho-alpha-D-ribose 1-diphosphate + uracil. It participates in pyrimidine metabolism; UMP biosynthesis via salvage pathway; UMP from uracil: step 1/1. Allosterically activated by GTP. Its function is as follows. Catalyzes the conversion of uracil and 5-phospho-alpha-D-ribose 1-diphosphate (PRPP) to UMP and diphosphate. In Shewanella denitrificans (strain OS217 / ATCC BAA-1090 / DSM 15013), this protein is Uracil phosphoribosyltransferase.